The sequence spans 202 residues: Putative 3-methyladenine DNA glycosylase (202 aa).

The protein belongs to the DNA glycosylase MPG family.

The polypeptide is Putative 3-methyladenine DNA glycosylase (Clostridium botulinum (strain Alaska E43 / Type E3)).